The sequence spans 621 residues: F-box only protein 21 (621 aa).

The F-box domain occupies 28–77; sequence SCLVNLPGEVLEYILCCGSLTAADIGRVSSTCRRLRELCQSSGKVWKEQF.

As to quaternary structure, interacts with SKP1 and CUL1.

In terms of biological role, substrate-recognition component of the SCF (SKP1-CUL1-F-box protein)-type E3 ubiquitin ligase complex. This chain is F-box only protein 21 (FBXO21), found in Pongo abelii (Sumatran orangutan).